The primary structure comprises 197 residues: MDYSKLPSQEIERLARTIHPGAWAIEPERPLATLLGSCVAVCLFDPQARVGGLNHFMLPNIRRGSNDDVDSLLSGAYAMEALLNALLQRGAKKLRLQAKAFGGGTIINTSGPSMSIGLRNAEFTKEWLDREGIPLLASDFLGPWSRKVLFLPMTGDAFCRRMVTNMATAETIAREEKSYADTLAQKPKSTEKKIELF.

Belongs to the CheD family.

The enzyme catalyses L-glutaminyl-[protein] + H2O = L-glutamyl-[protein] + NH4(+). Its function is as follows. Probably deamidates glutamine residues to glutamate on methyl-accepting chemotaxis receptors (MCPs), playing an important role in chemotaxis. The chain is Probable chemoreceptor glutamine deamidase CheD 2 from Dechloromonas aromatica (strain RCB).